The sequence spans 176 residues: Protein singles bar (176 aa).

Helical transmembrane passes span 13–35 (LGIR…LSRI), 71–91 (FLAT…CYAF), 111–131 (LASC…VVWL), and 140–160 (GFWA…AGIL). The region spanning 30–173 (FVLSRIGLLK…DAYLAFRHFR (144 aa)) is the MARVEL domain.

Its subcellular location is the membrane. Essential for myoblast fusion in developing embryos and pupae, and consequently is essential for muscle formation in adults. Required for progression past the pre-fusion complex stage of myoblast fusion. The chain is Protein singles bar from Drosophila melanogaster (Fruit fly).